The sequence spans 461 residues: Ribosomal protein uS12 methylthiotransferase RimO (461 aa).

An MTTase N-terminal domain is found at 13–128 (PKVGFVSLGC…VMQHVHMHLP (116 aa)). 6 residues coordinate [4Fe-4S] cluster: cysteine 22, cysteine 58, cysteine 87, cysteine 159, cysteine 163, and cysteine 166. One can recognise a Radical SAM core domain in the interval 145–390 (LTPRHYAYLK…MEVAEEVSAK (246 aa)). In terms of domain architecture, TRAM spans 393–461 (AKKVGKTLKV…ADGHDLWGEV (69 aa)).

Belongs to the methylthiotransferase family. RimO subfamily. The cofactor is [4Fe-4S] cluster.

Its subcellular location is the cytoplasm. The catalysed reaction is L-aspartate(89)-[ribosomal protein uS12]-hydrogen + (sulfur carrier)-SH + AH2 + 2 S-adenosyl-L-methionine = 3-methylsulfanyl-L-aspartate(89)-[ribosomal protein uS12]-hydrogen + (sulfur carrier)-H + 5'-deoxyadenosine + L-methionine + A + S-adenosyl-L-homocysteine + 2 H(+). Catalyzes the methylthiolation of an aspartic acid residue of ribosomal protein uS12. The sequence is that of Ribosomal protein uS12 methylthiotransferase RimO from Paraburkholderia xenovorans (strain LB400).